We begin with the raw amino-acid sequence, 159 residues long: MSSPQRRKAMPWALSLLLMGFQLLVTYAWCSEEEMGGNNKIVQDPMFLATVEFALNTFNVQSKEEHAYRLLRVLSSWREDSMDRKWRGKMVFSMNLQLRQTVCRKFEDDIDNCPFQESLELNNVRQGISFPQVHSCGCCMGCGVGTGAADKAIPRDKGK.

Residues 1-28 form the signal peptide; sequence MSSPQRRKAMPWALSLLLMGFQLLVTYA.

It belongs to the cystatin family. Expressed in heart, placenta, lung, liver, skeletal muscle and pancreas. Not expressed in brain. Expressed in epididymis, kidney, testis, spinal cord, and thymus with a strong expression in epididymis and kidney and a weak expression in the spinal cord and thymus.

The protein localises to the secreted. Functionally, may be involved in testis development. May play a role in hematopoietic differentiation or inflammation. Has immunomodulatory and antimicrobial functions against Francisella tularensis, a Gram-negative bacteria. This Homo sapiens (Human) protein is Cystatin-9 (CST9).